A 368-amino-acid polypeptide reads, in one-letter code: Quinolinate synthase (368 aa).

Iminosuccinate-binding residues include histidine 46 and serine 63. Residue cysteine 110 coordinates [4Fe-4S] cluster. Iminosuccinate contacts are provided by residues tyrosine 141–asparagine 143 and serine 162. Residue cysteine 230 coordinates [4Fe-4S] cluster. Residues histidine 256 to glutamate 258 and threonine 273 each bind iminosuccinate. Cysteine 320 serves as a coordination point for [4Fe-4S] cluster.

This sequence belongs to the quinolinate synthase family. Type 3 subfamily. Requires [4Fe-4S] cluster as cofactor.

The protein resides in the cytoplasm. The enzyme catalyses iminosuccinate + dihydroxyacetone phosphate = quinolinate + phosphate + 2 H2O + H(+). It functions in the pathway cofactor biosynthesis; NAD(+) biosynthesis; quinolinate from iminoaspartate: step 1/1. Functionally, catalyzes the condensation of iminoaspartate with dihydroxyacetone phosphate to form quinolinate. The protein is Quinolinate synthase of Bacillus cereus (strain ATCC 14579 / DSM 31 / CCUG 7414 / JCM 2152 / NBRC 15305 / NCIMB 9373 / NCTC 2599 / NRRL B-3711).